A 462-amino-acid chain; its full sequence is MSKLWGGRFTEEAEAWVEEFGASISFDQQLVNQDINGSIAHVTMLAKQGIVTKEEAEKIKIGLQYLLEEAKQNKLHFSVEAEDIHLNIEKMLMEKIGEVGGKLHTGRSRNDQVATDMHLYLKEKVEHIIKAIKQLQTVLVHQAENNIETIMPGYTHLQRAQPISFAHHILAYFWMLERDVNRYEDSLKRINISPLGAGALAGTTFPIDREYSAELLGFNGIYENSLDAVSDRDFILEFLSNSSMLMMHLSRFCEELILWSSQEFQFIEMSDQYATGSSIMPQKKNPDMAELIRGKTGRVYGNLFSLLTVMKGLPLAYNKDLQEDKEGMFDTVKTVEGCLHIMAGMLETMTVNKEKMGQAVTQDFSNATEIADYLANKGLPFRQAHEIVGKLVLHCTQKGIYLIDVPLATYKEMSALFEEDLYEVLSPYAAVKRRNSAGGTGFEQIEKALEKAKGLTKEAIKN.

The protein belongs to the lyase 1 family. Argininosuccinate lyase subfamily.

It localises to the cytoplasm. The enzyme catalyses 2-(N(omega)-L-arginino)succinate = fumarate + L-arginine. The protein operates within amino-acid biosynthesis; L-arginine biosynthesis; L-arginine from L-ornithine and carbamoyl phosphate: step 3/3. The polypeptide is Argininosuccinate lyase (Bacillus anthracis (strain A0248)).